Consider the following 334-residue polypeptide: Glyceraldehyde-3-phosphate dehydrogenase (334 aa).

Residues 12-13 (RI), Asp34, and Arg79 contribute to the NAD(+) site. D-glyceraldehyde 3-phosphate contacts are provided by residues 150–152 (SCT), Thr181, 210–211 (TG), and Arg233. The Nucleophile role is filled by Cys151. Asn315 provides a ligand contact to NAD(+).

The protein belongs to the glyceraldehyde-3-phosphate dehydrogenase family. As to quaternary structure, homotetramer.

Its subcellular location is the cytoplasm. It catalyses the reaction D-glyceraldehyde 3-phosphate + phosphate + NAD(+) = (2R)-3-phospho-glyceroyl phosphate + NADH + H(+). Its pathway is carbohydrate degradation; glycolysis; pyruvate from D-glyceraldehyde 3-phosphate: step 1/5. This is Glyceraldehyde-3-phosphate dehydrogenase (GPD) from Wickerhamomyces ciferrii (strain ATCC 14091 / BCRC 22168 / CBS 111 / JCM 3599 / NBRC 0793 / NRRL Y-1031 F-60-10) (Yeast).